The chain runs to 376 residues: MSDEEQSAIVCDNGSGMVKAGFSGDDALCHVFPSIVGRPKNEQAMMGSASKKLFVGDEAQAKRGVLSLKYPIEHGIVTNWDDMEKIWHHTFYNDVRVNPESHSVLLTEAPMNPKQNREKMTQIMFETFGVPAMYVGIQAVLSLYSSGRTTGIVLDAGDGVTHTVPIYEGYSLPHAIRRMDMAGRDLTEYLMKLLMESGMTFTTSAEKEIVRNVKEQLCYVALDFDEEVTNSAKTVNEEPFELPDGTIMQVGNQRFRCPEALFKPMLIGLDEAPGFHEMTFQSINKCDIDVRRDLYGNIVLSGGTTMFKNLPERLGKEISNLAPSSIKPKVVAPPERKYSVWIGGSILSSLTTFQTMWIKKSEYDEAGPSIVHNKCF.

It belongs to the actin family.

Its subcellular location is the cytoplasm. It is found in the cytoskeleton. It catalyses the reaction ATP + H2O = ADP + phosphate + H(+). Functionally, actins are highly conserved proteins that are involved in various types of cell motility and are ubiquitously expressed in all eukaryotic cells. The sequence is that of Actin from Trypanosoma cruzi.